Here is a 172-residue protein sequence, read N- to C-terminus: C-phycocyanin-2 beta subunit (172 aa).

Residue asparagine 72 is modified to N4-methylasparagine. Cysteine 82 and cysteine 153 together coordinate (2R,3E)-phycocyanobilin.

This sequence belongs to the phycobiliprotein family. In terms of assembly, heterodimer of an alpha and a beta subunit, which further assembles into trimers and the trimers into hexamers. Contains two covalently linked bilin chromophores.

Its subcellular location is the cellular thylakoid membrane. Functionally, light-harvesting photosynthetic bile pigment-protein from the phycobiliprotein complex (phycobilisome, PBS). Phycocyanin is the major phycobiliprotein in the PBS rod. The polypeptide is C-phycocyanin-2 beta subunit (cpcB2) (Pseudanabaena tenuis (strain PCC 7409)).